The sequence spans 185 residues: Intraflagellar transport protein 22 homolog (185 aa).

GTP contacts are provided by residues 10–17 (GPCESGKT), 63–67 (DCGGD), and 123–126 (HKPG). Residue Ser137 is modified to Phosphoserine.

Belongs to the small GTPase superfamily. Rab family. Component of the IFT complex B, at least composed of IFT20, IFT22, IFT25, IFT27, IFT46, IFT52, TRAF3IP1/IFT54, IFT57, IFT74, IFT80, IFT81, and IFT88. Interacts with IFT88. Interacts with CFAP61.

It is found in the cell projection. The protein localises to the cilium. Its function is as follows. Small GTPase-like component of the intraflagellar transport (IFT) complex B. The protein is Intraflagellar transport protein 22 homolog (Ift22) of Rattus norvegicus (Rat).